The following is a 2197-amino-acid chain: MLARCVSYQGSCDNINGILTRDYAEIYTDWANYYLERAKSKRKVTDLSADCRDGLLLAEVIEAVTSFKVPDLVKKPKNQQQMFDNVNSCLHVLRSQSVGGLENITTNDICAGRLKAVLALFFALSRFKQQAKQTKSIGVGCGGGVGGSSSTLTGSGSVLGIGIGGLRTPGSSLNQDKNQQEQQQQQQQQQTPQQLAQSLENGNEMVNRQIAPAYAKVNGGTAIPLPATVMVQRRCPPDKVRPLPPTPNHTPSIPGLGKSGSDFNTSRPNSPPTSNHTIQSLKSGNNNSLRPPSIKSGIPSPSSPQTAPQKHSMLDKLKLFNKEKQQNAVNAASVASKTQIQSKRTSSSSGFSSARSERSDSSLSLNDGHGSQLKPPSISVSSQKPQPKTKQSKLLAAQQKKEQANKATKLDKKEKSPARSLNKEESGNESRSSTMGRTGKSSLVRAVGGVEKNTPKTSSKSSLHSKSDSKSSLKAPQLLQSPSSGGLPKPIAAIKGTSKLPSLGGGAGHLPAAESQQNQQLLKRETSDISSNISQPPPAEPPISTHAHIHQNQTPPPPYYANSQPTSHISSHGFLSEPSTPQHSSGIYGSSRLPPPKSALSAPRKLEYNAGPHILSSPTHHQRQGLPRPLVNSAPNTPTASPNKFHTIPSKIVGTIYESKEEQLLPAPPPASGGSSILPMRPLLRGYNSHVTLPTRGARGGHHPHQSYLDFCESDIGQGYCSDGDALRVGSSPGGSRFHDIDNGYLSEGSSGLNGPSSSAGGISPGKHFLSMMRARTQLPTTIEERIRNSRGSLDSIGTAANGSSAASQASSSGGSTTTHAQNNNNNNNNNSGGGAKMDGSPHHRPGSRNGRDNWSKMPEPLNGQKVEKSDKSSPSRRSMGGGGSGSSSKQGSPSSSSRTKGVPPSFGYVKRANGSIASTAEQQNIAMMMAAGGAGANGLPCGRTAHVSAVPRTASGRKVAGGTQTLPNDMNKLPPNTQHRSFSLTGPTATQLSQSIRERLATGSHSLPKPGSDLHVFQHRISNRGGTRHDGSLSDTQTYAEVKPEYSSYAMWLKHSNTAGSRLSDGESVEQLQIGSPALTRHGHKMIHNRSGGPGQMAGQMSGNESPYVQSPRMNRSNSIRSTKSEKMYPSMMSRAGEVEIEPYYCLPVGTNGVLTAQMAAAMAAQSQAAQGNPGVGVNVGGVAWSQPTSPTPLTRGPFNTAAGASVLSPTHGTTSAAGLVGPGGGAGGGAMVGHRLTYPKKNDEVHGSAASLLSGGSSLYGNAEERQAHEIRRLKRELQDARDQVLSLSSQLSTNAHVVTAFEQSLSNMTNRLHQLTATAERKDGELTDMRQTIELLRKQSIQAGLTTAHMQSMGVQTQGQGQVQGQALGQALGQPGSDQKPPNSGSQRAINANNGSMPLGMQRQHSTDSMCSLNSISSGCSAAQDKNKANKKKGWLRSSFTKAFSRNAKISKTSRHVGHHHHHNHSQQELASGKLPLHNGHGEPLGLASLATQPAPPLPNSKQSSPAKTVTLIDNAKPIDAIDQEDQHVVEDLKKQLREKDLVLTDIRLEALSSASQLESLKEMMNKMRAEMMSLKHNNERLQKLVTTRSLAGSEASLGQAISPNGSVAGSSEVSRRYSLADSNSRPPMELPARLSEELELEEDCLPPAPAPEQPPPPAPNGVSVAPLSPSTHVDLTPPPPALEAAPMASPVHMASATEELADVCDGKKIAIACYLGQPEAFAKYCEELQELDGFYANGHEADSQSQSERKSNYTSASCNEFVIACTYISGKTTWQNLDYVVRKTFKDYVARIDPGTNLGLNTDSITSYHLGEAKRGPEMGFPELLPCGYIVGSVRTLYICLQGVGSLAFDSLIPRSIVHRYISLLTEHRRLILCGPSGTGKSYLARRLAEFLVARSARGNPSEAIATFNVDHKSSKDLRQYLGHIAEQAAIANGVSELPSVIILDNLHHASALGDVFSCLLSAGPANKLPCIIGTMSQATCNTTNLQLHHNFRWVLTANHMEPVKGFLGRFLRRRLFQLELQTQHPQPELAAVLAWLPSVWQHINRFLEVHSSSDVTIGPRLFLACPMDLKDSQVWFTDIWNYHLSPYLVEAVREGVQLYGRRGGAWNDPSAFIRNSYPWPYGPDSVPPLRQINAEDVGLEGVALTNGDQQDPLLNMLMRLQEAANYSEAQDQESDCASLDSNVTPESSAGAE.

A Calponin-homology (CH) domain is found at 21-129 (RDYAEIYTDW…LFFALSRFKQ (109 aa)). 7 disordered regions span residues 165–197 (GLRT…QLAQ), 235–311 (CPPD…PQKH), 331–646 (AASV…NKFH), 730–767 (GSSP…SPGK), 788–910 (RNSR…FGYV), 1094–1119 (GPGQ…NRSN), and 1202–1223 (TAAG…GLVG). The span at 175–197 (QDKNQQEQQQQQQQQQTPQQLAQ) shows a compositional bias: low complexity. Over residues 261-290 (SDFNTSRPNSPPTSNHTIQSLKSGNNNSLR) the composition is skewed to polar residues. Over residues 291-304 (PPSIKSGIPSPSSP) the composition is skewed to low complexity. Positions 331–341 (AASVASKTQIQ) are enriched in polar residues. Composition is skewed to low complexity over residues 342–354 (SKRT…FSSA) and 379–398 (SVSS…LAAQ). The span at 399 to 428 (QKKEQANKATKLDKKEKSPARSLNKEESGN) shows a compositional bias: basic and acidic residues. Polar residues-rich tracts occupy residues 429–441 (ESRS…TGKS), 561–570 (ANSQPTSHIS), 577–588 (EPSTPQHSSGIY), and 633–644 (SAPNTPTASPNK). Low complexity-rich tracts occupy residues 755–766 (GPSSSAGGISPG), 796–831 (SIGT…NNNN), and 887–904 (SSSK…KGVP). The segment covering 1100 to 1119 (GQMSGNESPYVQSPRMNRSN) has biased composition (polar residues). Residues 1262 to 1342 (YGNAEERQAH…RQTIELLRKQ (81 aa)) are a coiled coil. 2 disordered regions span residues 1373–1415 (QALG…SMCS) and 1455–1511 (KTSR…SPAK). 2 stretches are compositionally biased toward polar residues: residues 1379–1399 (GSDQ…NNGS) and 1406–1415 (RQHSTDSMCS). Residues 1455 to 1468 (KTSRHVGHHHHHNH) show a composition bias toward basic residues. Residues 1556–1591 (SSASQLESLKEMMNKMRAEMMSLKHNNERLQKLVTT) are a coiled coil. Disordered stretches follow at residues 1600–1633 (SLGQ…PPME), 1648–1690 (CLPP…EAAP), and 2172–2197 (SEAQ…AGAE). A compositionally biased stretch (polar residues) spans 1603-1616 (QAISPNGSVAGSSE). Positions 1650–1663 (PPAPAPEQPPPPAP) are enriched in pro residues. Residues 2184–2197 (LDSNVTPESSAGAE) show a composition bias toward polar residues.

The protein belongs to the Nav/unc-53 family.

Its function is as follows. Required for the immune deficiency pathway, which mediates responses to Gram-negative bacterial infection. Favors Rel activation and nuclear translocation. In Drosophila melanogaster (Fruit fly), this protein is Protein sickie (sick).